The chain runs to 185 residues: Thiol:disulfide interchange protein DsbE (185 aa).

Topologically, residues 1-4 are cytoplasmic; it reads MKRN. The helical transmembrane segment at 5-25 threads the bilayer; sequence VLLLPLLIFLLIAAALLWQLA. At 26–185 the chain is on the periplasmic side; the sequence is RNAQGDDPTN…WDRYSREAAQ (160 aa). The Thioredoxin domain maps to 39–177; that stretch reads ALTGKPVPAF…WESELKPLWD (139 aa). Residues cysteine 80 and cysteine 83 are joined by a disulfide bond.

This sequence belongs to the thioredoxin family. DsbE subfamily.

The protein localises to the cell inner membrane. Its function is as follows. Involved in disulfide bond formation. Catalyzes a late, reductive step in the assembly of periplasmic c-type cytochromes, probably the reduction of disulfide bonds of the apocytochrome c to allow covalent linkage with the heme. Possible subunit of a heme lyase. This chain is Thiol:disulfide interchange protein DsbE (dsbE1), found in Salmonella typhimurium (strain LT2 / SGSC1412 / ATCC 700720).